Reading from the N-terminus, the 561-residue chain is Microtubule-associated protein VP6 (561 aa).

As to quaternary structure, interacts with VP2.

It localises to the virion. It is found in the host cytoplasm. The protein localises to the host cytoskeleton. In terms of biological role, minor inner capsid component. Displays NTPase and RNA 5'-triphosphatase (RTPase) activities. May function as a cofactor of polymerase VP2. Associates with microtubules and plays a role in the formation, structural organization and morphology of viral inclusions, where the assembly of cores and the replication of viral RNA occur. This chain is Microtubule-associated protein VP6 (S6), found in Lymantria dispar cypovirus 1 (isolate Rao) (LdCPV-1).